A 362-amino-acid chain; its full sequence is Chorismate synthase (362 aa).

Arg46 serves as a coordination point for NADP(+). Residues 122 to 124 (RSS), 238 to 239 (NA), Gly278, 293 to 297 (KPTPS), and Arg319 contribute to the FMN site.

It belongs to the chorismate synthase family. In terms of assembly, homotetramer. FMNH2 serves as cofactor.

The catalysed reaction is 5-O-(1-carboxyvinyl)-3-phosphoshikimate = chorismate + phosphate. The protein operates within metabolic intermediate biosynthesis; chorismate biosynthesis; chorismate from D-erythrose 4-phosphate and phosphoenolpyruvate: step 7/7. Its function is as follows. Catalyzes the anti-1,4-elimination of the C-3 phosphate and the C-6 proR hydrogen from 5-enolpyruvylshikimate-3-phosphate (EPSP) to yield chorismate, which is the branch point compound that serves as the starting substrate for the three terminal pathways of aromatic amino acid biosynthesis. This reaction introduces a second double bond into the aromatic ring system. The protein is Chorismate synthase of Campylobacter jejuni (strain RM1221).